Reading from the N-terminus, the 139-residue chain is Putative pre-16S rRNA nuclease (139 aa).

This sequence belongs to the YqgF nuclease family.

The protein localises to the cytoplasm. Its function is as follows. Could be a nuclease involved in processing of the 5'-end of pre-16S rRNA. The polypeptide is Putative pre-16S rRNA nuclease (Streptococcus pyogenes serotype M2 (strain MGAS10270)).